Here is an 807-residue protein sequence, read N- to C-terminus: Glycerol-3-phosphate acyltransferase (807 aa).

The short motif at 305 to 310 (CHRSHM) is the HXXXXD motif element.

It belongs to the GPAT/DAPAT family.

It is found in the cell inner membrane. The enzyme catalyses sn-glycerol 3-phosphate + an acyl-CoA = a 1-acyl-sn-glycero-3-phosphate + CoA. Its pathway is phospholipid metabolism; CDP-diacylglycerol biosynthesis; CDP-diacylglycerol from sn-glycerol 3-phosphate: step 1/3. This is Glycerol-3-phosphate acyltransferase from Aliivibrio fischeri (strain MJ11) (Vibrio fischeri).